Here is a 266-residue protein sequence, read N- to C-terminus: Orcokinin peptides type B (266 aa).

Residues 1-20 (MTAQMFTIALLLSLSAIAAA) form the signal peptide. Propeptides lie at residues 21-46 (GTIK…GAPV), 240-246 (DYDVFPD), and 264-266 (NVE).

Belongs to the orcokinin family.

It is found in the secreted. Myotropic peptides that enhance both the frequency and amplitude of spontaneous hindgut contractions. The sequence is that of Orcokinin peptides type B from Procambarus clarkii (Red swamp crayfish).